The chain runs to 549 residues: Longitudinals lacking protein, isoforms H/M/V (549 aa).

A BTB domain is found at Val32–Gln97. 2 disordered regions span residues Leu115–Leu200 and Ser228–Ser340. 4 stretches are compositionally biased toward low complexity: residues Ser162–Pro175, Ser228–Thr251, Thr263–Ser293, and Asn329–Ser340.

Mostly neuronal.

Its subcellular location is the nucleus. Putative transcription factor required for axon growth and guidance in the central and peripheral nervous systems. Repels CNS axons away from the midline by promoting the expression of the midline repellent sli and its receptor robo. The protein is Longitudinals lacking protein, isoforms H/M/V of Drosophila melanogaster (Fruit fly).